The following is a 229-amino-acid chain: Probable septum site-determining protein MinC (229 aa).

It belongs to the MinC family. Interacts with MinD and FtsZ.

Cell division inhibitor that blocks the formation of polar Z ring septums. Rapidly oscillates between the poles of the cell to destabilize FtsZ filaments that have formed before they mature into polar Z rings. Prevents FtsZ polymerization. The protein is Probable septum site-determining protein MinC of Ruminiclostridium cellulolyticum (strain ATCC 35319 / DSM 5812 / JCM 6584 / H10) (Clostridium cellulolyticum).